The sequence spans 405 residues: MGSYMNKTSVVKVGNVLIGGDNPVVVQSMTDTYTADVEKTVRQILALHKAGSEIVRITVNDESAAAAVPEIVKELAKHDCHVPLVGDFHYNGHTLLSKYPECAKALAKYRINPGNVGFGKKKDTQFAEIIKIAIANDKPVRIGVNWGSLDQALLARLIDENNAQENPLSLQQIMYKALITSALESAKYAEELGLAKDKIIISCKVSEVQDLIAVYQKLAKECDYALHLGLTEAGMGTKGIVASAVSLGILLQQGIGNTIRVSLTPAPNAPRTEEVRVCREILQNLGMRTFTPSVTSCPGCGRTTSSFFRELTSKVKDHLDEKMHTWKEQYHGVEAMKVAVMGCVVNGPGESKNADIGISLPGSGESPVAPVFIDGKKAHTLRGDNISEEFIEIVENYVKNRYGKK.

4 residues coordinate [4Fe-4S] cluster: cysteine 297, cysteine 300, cysteine 343, and glutamate 350.

The protein belongs to the IspG family. It depends on [4Fe-4S] cluster as a cofactor.

The catalysed reaction is (2E)-4-hydroxy-3-methylbut-2-enyl diphosphate + oxidized [flavodoxin] + H2O + 2 H(+) = 2-C-methyl-D-erythritol 2,4-cyclic diphosphate + reduced [flavodoxin]. It functions in the pathway isoprenoid biosynthesis; isopentenyl diphosphate biosynthesis via DXP pathway; isopentenyl diphosphate from 1-deoxy-D-xylulose 5-phosphate: step 5/6. Converts 2C-methyl-D-erythritol 2,4-cyclodiphosphate (ME-2,4cPP) into 1-hydroxy-2-methyl-2-(E)-butenyl 4-diphosphate. In Francisella tularensis subsp. mediasiatica (strain FSC147), this protein is 4-hydroxy-3-methylbut-2-en-1-yl diphosphate synthase (flavodoxin).